The following is a 133-amino-acid chain: UPF0102 protein Plav_3586 (133 aa).

Belongs to the UPF0102 family.

The polypeptide is UPF0102 protein Plav_3586 (Parvibaculum lavamentivorans (strain DS-1 / DSM 13023 / NCIMB 13966)).